The chain runs to 397 residues: Elongation factor Tu (397 aa).

The region spanning 10–207 (KPHVNIGTIG…ACDSYIPEPQ (198 aa)) is the tr-type G domain. Positions 19–26 (GHIDHGKT) are G1. Residue 19–26 (GHIDHGKT) participates in GTP binding. Thr-26 is a Mg(2+) binding site. The tract at residues 60–64 (GITIA) is G2. The tract at residues 81 to 84 (DCPG) is G3. GTP-binding positions include 81 to 85 (DCPGH) and 136 to 139 (NKCD). Residues 136 to 139 (NKCD) form a G4 region. The segment at 174–176 (SAL) is G5.

This sequence belongs to the TRAFAC class translation factor GTPase superfamily. Classic translation factor GTPase family. EF-Tu/EF-1A subfamily. As to quaternary structure, monomer.

It is found in the cytoplasm. The enzyme catalyses GTP + H2O = GDP + phosphate + H(+). Functionally, GTP hydrolase that promotes the GTP-dependent binding of aminoacyl-tRNA to the A-site of ribosomes during protein biosynthesis. This Nitratidesulfovibrio vulgaris (strain DSM 19637 / Miyazaki F) (Desulfovibrio vulgaris) protein is Elongation factor Tu.